The primary structure comprises 425 residues: MSNSLSSQIFTRKMLICAFTGFNSGLPLFVLSQMLPVWLTDKHLSIELIGAVTGVMLPYGLKFLWAPLLDRYFPSFLGRRRSWMLLSQVALLILLYIISLFDPLTQLGTVANIALLIAFFSATQDIVLDAYRREILSDHELGLGNTIHINAYRIAGLIPGGLSLYLAAIYPWETVFLWTALCMLAGIFMTLFLAKEPKIDMQQTNQPFYQAFWIPLQEFFQRKGVIQAIGFLLFLFLYKFGDSFATTLQTKFIYDMGFSKEDIAIVVKSTALWSSILSGLAGGMIMLKLGINRALWLFGLVQMVTIGGFIWLAAFGHFDVITSAELWKLGVVIAAEYIGVGLGTAAFVAFMARESNPLYTATQLALFTSLSALPSKVLGILSGYVVGAVGYYQYFWFCLFLAIPGMLCLFWVAPLKQENNKTSSV.

12 helical membrane passes run 15-35, 48-68, 84-104, 107-127, 149-169, 174-194, 225-245, 271-291, 295-315, 331-351, 370-390, and 395-415; these read LICA…SQML, LIGA…WAPL, MLLS…FDPL, LGTV…QDIV, INAY…LAAI, TVFL…LFLA, VIQA…DSFA, ALWS…KLGI, LWLF…LAAF, VVIA…VAFM, LSAL…GAVG, and FWFC…VAPL.

The protein to E.coli AmpG and yeast YBR220c.

It localises to the cell inner membrane. This is an uncharacterized protein from Haemophilus influenzae (strain ATCC 51907 / DSM 11121 / KW20 / Rd).